The sequence spans 145 residues: D-aminoacyl-tRNA deacylase (145 aa).

The Gly-cisPro motif, important for rejection of L-amino acids signature appears at 137–138 (GP).

The protein belongs to the DTD family. In terms of assembly, homodimer.

It localises to the cytoplasm. It carries out the reaction glycyl-tRNA(Ala) + H2O = tRNA(Ala) + glycine + H(+). The catalysed reaction is a D-aminoacyl-tRNA + H2O = a tRNA + a D-alpha-amino acid + H(+). An aminoacyl-tRNA editing enzyme that deacylates mischarged D-aminoacyl-tRNAs. Also deacylates mischarged glycyl-tRNA(Ala), protecting cells against glycine mischarging by AlaRS. Acts via tRNA-based rather than protein-based catalysis; rejects L-amino acids rather than detecting D-amino acids in the active site. By recycling D-aminoacyl-tRNA to D-amino acids and free tRNA molecules, this enzyme counteracts the toxicity associated with the formation of D-aminoacyl-tRNA entities in vivo and helps enforce protein L-homochirality. This is D-aminoacyl-tRNA deacylase from Pectobacterium atrosepticum (strain SCRI 1043 / ATCC BAA-672) (Erwinia carotovora subsp. atroseptica).